The sequence spans 427 residues: Stemphyloxin II biosynthesis cluster transcription factor sthR (427 aa).

Residues 15–45 constitute a DNA-binding region (zn(2)-C6 fungal-type); the sequence is CDRCRKQKLRCPPDKDDMGTCGRCLRAGVAC. A disordered region spans residues 51 to 70; sequence KPRGRSQKHGISTDGTSHVS. Positions 59–69 are enriched in polar residues; that stretch reads HGISTDGTSHV.

It localises to the nucleus. Transcription factor that regulates the expression of the gene cluster that mediates the biosynthesis of the phytotoxin stemphyloxin II. This is Stemphyloxin II biosynthesis cluster transcription factor sthR from Phaeosphaeria nodorum (strain SN15 / ATCC MYA-4574 / FGSC 10173) (Glume blotch fungus).